A 443-amino-acid chain; its full sequence is 23S rRNA (uracil(1939)-C(5))-methyltransferase RlmD (443 aa).

A TRAM domain is found at Lys8–Glu66. Residues Cys79, Cys85, Cys88, and Cys167 each contribute to the [4Fe-4S] cluster site. S-adenosyl-L-methionine contacts are provided by Gln276, Phe305, Asn310, Glu326, Asp353, and Asp374. Cys400 (nucleophile) is an active-site residue.

It belongs to the class I-like SAM-binding methyltransferase superfamily. RNA M5U methyltransferase family. RlmD subfamily.

It carries out the reaction uridine(1939) in 23S rRNA + S-adenosyl-L-methionine = 5-methyluridine(1939) in 23S rRNA + S-adenosyl-L-homocysteine + H(+). In terms of biological role, catalyzes the formation of 5-methyl-uridine at position 1939 (m5U1939) in 23S rRNA. The chain is 23S rRNA (uracil(1939)-C(5))-methyltransferase RlmD from Methylococcus capsulatus (strain ATCC 33009 / NCIMB 11132 / Bath).